The primary structure comprises 514 residues: 2-isopropylmalate synthase (514 aa).

A Pyruvate carboxyltransferase domain is found at 5–268 (LIIFDTTLRD…DVGIDTSQIV (264 aa)). Mn(2+) is bound by residues Asp14, His202, His204, and Asn239. The regulatory domain stretch occupies residues 395–514 (KFVSLSQRSE…KDDKVNPQRS (120 aa)).

It belongs to the alpha-IPM synthase/homocitrate synthase family. LeuA type 1 subfamily. Homodimer. Requires Mn(2+) as cofactor.

The protein localises to the cytoplasm. It carries out the reaction 3-methyl-2-oxobutanoate + acetyl-CoA + H2O = (2S)-2-isopropylmalate + CoA + H(+). Its pathway is amino-acid biosynthesis; L-leucine biosynthesis; L-leucine from 3-methyl-2-oxobutanoate: step 1/4. Its function is as follows. Catalyzes the condensation of the acetyl group of acetyl-CoA with 3-methyl-2-oxobutanoate (2-ketoisovalerate) to form 3-carboxy-3-hydroxy-4-methylpentanoate (2-isopropylmalate). The sequence is that of 2-isopropylmalate synthase from Burkholderia cenocepacia (strain ATCC BAA-245 / DSM 16553 / LMG 16656 / NCTC 13227 / J2315 / CF5610) (Burkholderia cepacia (strain J2315)).